A 145-amino-acid polypeptide reads, in one-letter code: D-aminoacyl-tRNA deacylase (145 aa).

The Gly-cisPro motif, important for rejection of L-amino acids signature appears at 137-138 (GP).

Belongs to the DTD family. As to quaternary structure, homodimer.

The protein resides in the cytoplasm. It carries out the reaction glycyl-tRNA(Ala) + H2O = tRNA(Ala) + glycine + H(+). The catalysed reaction is a D-aminoacyl-tRNA + H2O = a tRNA + a D-alpha-amino acid + H(+). An aminoacyl-tRNA editing enzyme that deacylates mischarged D-aminoacyl-tRNAs. Also deacylates mischarged glycyl-tRNA(Ala), protecting cells against glycine mischarging by AlaRS. Acts via tRNA-based rather than protein-based catalysis; rejects L-amino acids rather than detecting D-amino acids in the active site. By recycling D-aminoacyl-tRNA to D-amino acids and free tRNA molecules, this enzyme counteracts the toxicity associated with the formation of D-aminoacyl-tRNA entities in vivo and helps enforce protein L-homochirality. This chain is D-aminoacyl-tRNA deacylase, found in Cronobacter sakazakii (strain ATCC BAA-894) (Enterobacter sakazakii).